Reading from the N-terminus, the 341-residue chain is Cyclic GMP-AMP synthase-like receptor (341 aa).

ATP is bound by residues S64 and E77–D79. The Mg(2+) site is built by E77, D79, and D172. Residue D172 coordinates GTP. ATP is bound by residues K230 and S246 to K250. E258 lines the Mn(2+) pocket.

The protein belongs to the mab-21 family. Mg(2+) serves as cofactor. The cofactor is Mn(2+).

It carries out the reaction GTP + ATP = 2',3'-cGAMP + 2 diphosphate. The catalysed reaction is GTP + ATP = pppGp(2'-5')A + diphosphate. It catalyses the reaction pppGp(2'-5')A = 2',3'-cGAMP + diphosphate. Nucleotidyltransferase that catalyzes the formation of cyclic GMP-AMP (2',3'-cGAMP) from ATP and GTP and plays a key role in innate immunity. Acts as a key sensor of double-stranded RNA (dsRNA), the presence of dsRNA in the cytoplasm being a danger signal that triggers the immune responses. Directly binds dsRNA, activating the nucleotidyltransferase activity, leading to synthesis of 2',3'-cGAMP, a second messenger that binds to and activates Sting, thereby triggering the immune response via activation of the NF-kappa-B transcription factor. The polypeptide is Cyclic GMP-AMP synthase-like receptor (Hydra vulgaris (Hydra)).